Here is a 377-residue protein sequence, read N- to C-terminus: Flap endonuclease 1 (377 aa).

Residues 1–104 form an N-domain region; that stretch reads MGIQGLAKLL…GELAKRTERR (104 aa). Position 34 (Asp-34) interacts with Mg(2+). The DNA site is built by Arg-47 and Arg-70. Mg(2+)-binding residues include Asp-86, Glu-158, Glu-160, Asp-179, and Asp-181. Residues 122 to 253 form an I-domain region; that stretch reads NIDKFSRRLV…KRSVDLIRQH (132 aa). Glu-158 serves as a coordination point for DNA. Residues Gly-231 and Asp-233 each coordinate DNA. Mg(2+) is bound at residue Asp-233. Positions 336 to 344 are interaction with PCNA; that stretch reads TQGRLDSFF. The tract at residues 337–377 is disordered; that stretch reads QGRLDSFFKVLPSPANKRKLQDGKGSQNKKAKTGGKFKRPK. Residues 363-377 show a composition bias toward basic residues; that stretch reads QNKKAKTGGKFKRPK.

Belongs to the XPG/RAD2 endonuclease family. FEN1 subfamily. In terms of assembly, interacts with PCNA. Three molecules of FEN1 bind to one PCNA trimer with each molecule binding to one PCNA monomer. PCNA stimulates the nuclease activity without altering cleavage specificity. Mg(2+) is required as a cofactor. Phosphorylated. Phosphorylation upon DNA damage induces relocalization to the nuclear plasma.

The protein resides in the nucleus. It localises to the nucleolus. The protein localises to the nucleoplasm. It is found in the mitochondrion. Its function is as follows. Structure-specific nuclease with 5'-flap endonuclease and 5'-3' exonuclease activities involved in DNA replication and repair. During DNA replication, cleaves the 5'-overhanging flap structure that is generated by displacement synthesis when DNA polymerase encounters the 5'-end of a downstream Okazaki fragment. It enters the flap from the 5'-end and then tracks to cleave the flap base, leaving a nick for ligation. Also involved in the long patch base excision repair (LP-BER) pathway, by cleaving within the apurinic/apyrimidinic (AP) site-terminated flap. Acts as a genome stabilization factor that prevents flaps from equilibrating into structures that lead to duplications and deletions. Also possesses 5'-3' exonuclease activity on nicked or gapped double-stranded DNA, and exhibits RNase H activity. Also involved in replication and repair of rDNA and in repairing mitochondrial DNA. This chain is Flap endonuclease 1, found in Nematostella vectensis (Starlet sea anemone).